Here is a 114-residue protein sequence, read N- to C-terminus: ATP synthase epsilon chain (114 aa).

It belongs to the ATPase epsilon chain family. In terms of assembly, F-type ATPases have 2 components, CF(1) - the catalytic core - and CF(0) - the membrane proton channel. CF(1) has five subunits: alpha(3), beta(3), gamma(1), delta(1), epsilon(1). CF(0) has three main subunits: a, b and c.

The protein resides in the cell membrane. Produces ATP from ADP in the presence of a proton gradient across the membrane. This Wolbachia pipientis wMel protein is ATP synthase epsilon chain.